A 222-amino-acid polypeptide reads, in one-letter code: uncharacterized protein (222 aa).

It belongs to the ycf73 family.

It localises to the plastid. The protein localises to the chloroplast. This is an uncharacterized protein from Oryza nivara (Indian wild rice).